We begin with the raw amino-acid sequence, 384 residues long: D-alanine--D-alanine ligase (384 aa).

The region spanning 167-374 is the ATP-grasp domain; the sequence is KKLFAAEGLP…YPTLLATMVD (208 aa). Position 195 to 250 (195 to 250) interacts with ATP; that stretch reads CERLSLPVFVKPARGGSSIGISRVSSWGQLPSAIAYARRHDPKVIVEAAVNGRELE. Aspartate 329, glutamate 341, and asparagine 343 together coordinate Mg(2+).

The protein belongs to the D-alanine--D-alanine ligase family. It depends on Mg(2+) as a cofactor. The cofactor is Mn(2+).

Its subcellular location is the cytoplasm. It catalyses the reaction 2 D-alanine + ATP = D-alanyl-D-alanine + ADP + phosphate + H(+). The protein operates within cell wall biogenesis; peptidoglycan biosynthesis. Functionally, cell wall formation. This is D-alanine--D-alanine ligase from Mycobacterium leprae (strain TN).